The primary structure comprises 325 residues: MAAAAASLRRTVLGPRGVGLPGASAPGLLGGARSRQLPLRTPQAVSLSSKSGPSRGRKVMLSALGMLAAGGAGLAVALHSAVSASDLELHPPSYPWSHRGLLSSLDHTSIRRGFQVYKQVCSSCHSMDYVAYRHLVGVCYTEEEAKALAEEVEVQDGPNDDGEMFMRPGKLSDYFPKPYPNPEAARAANNGALPPDLSYIVRARHGGEDYVFSLLTGYCEPPTGVSLREGLYFNPYFPGQAIGMAPPIYTEVLEYDDGTPATMSQVAKDVATFLRWASEPEHDHRKRMGLKMLLMMGLLLPLTYAMKRHKWSVLKSRKLAYRPPK.

The transit peptide at 1-84 (MAAAAASLRR…AVALHSAVSA (84 aa)) directs the protein to the mitochondrion. The Mitochondrial intermembrane portion of the chain corresponds to 85-287 (SDLELHPPSY…SEPEHDHRKR (203 aa)). The region spanning 108–209 (TSIRRGFQVY…IVRARHGGED (102 aa)) is the Cytochrome c domain. The heme c site is built by cysteine 121, cysteine 124, histidine 125, and methionine 244. A helical transmembrane segment spans residues 288-308 (MGLKMLLMMGLLLPLTYAMKR). Over 309 to 325 (HKWSVLKSRKLAYRPPK) the chain is Mitochondrial matrix.

Belongs to the cytochrome c family. In terms of assembly, component of the ubiquinol-cytochrome c oxidoreductase (cytochrome b-c1 complex, complex III, CIII), a multisubunit enzyme composed of 11 subunits. The complex is composed of 3 respiratory subunits cytochrome b, cytochrome c1 and Rieske protein UQCRFS1, 2 core protein subunits UQCRC1/QCR1 and UQCRC2/QCR2, and 6 low-molecular weight protein subunits UQCRH/QCR6, UQCRB/QCR7, UQCRQ/QCR8, UQCR10/QCR9, UQCR11/QCR10 and subunit 9, the cleavage product of Rieske protein UQCRFS1. The complex exists as an obligatory dimer and forms supercomplexes (SCs) in the inner mitochondrial membrane with NADH-ubiquinone oxidoreductase (complex I, CI) and cytochrome c oxidase (complex IV, CIV), resulting in different assemblies (supercomplex SCI(1)III(2)IV(1) and megacomplex MCI(2)III(2)IV(2)). Interacts with FLVCR2; this interaction occurs in the absence of heme and is disrupted upon heme binding. The cofactor is heme c.

The protein localises to the mitochondrion inner membrane. The enzyme catalyses a quinol + 2 Fe(III)-[cytochrome c](out) = a quinone + 2 Fe(II)-[cytochrome c](out) + 2 H(+)(out). Its function is as follows. Component of the ubiquinol-cytochrome c oxidoreductase, a multisubunit transmembrane complex that is part of the mitochondrial electron transport chain which drives oxidative phosphorylation. The respiratory chain contains 3 multisubunit complexes succinate dehydrogenase (complex II, CII), ubiquinol-cytochrome c oxidoreductase (cytochrome b-c1 complex, complex III, CIII) and cytochrome c oxidase (complex IV, CIV), that cooperate to transfer electrons derived from NADH and succinate to molecular oxygen, creating an electrochemical gradient over the inner membrane that drives transmembrane transport and the ATP synthase. The cytochrome b-c1 complex catalyzes electron transfer from ubiquinol to cytochrome c, linking this redox reaction to translocation of protons across the mitochondrial inner membrane, with protons being carried across the membrane as hydrogens on the quinol. In the process called Q cycle, 2 protons are consumed from the matrix, 4 protons are released into the intermembrane space and 2 electrons are passed to cytochrome c. Cytochrome c1 is a catalytic core subunit containing a c-type heme. It transfers electrons from the [2Fe-2S] iron-sulfur cluster of the Rieske protein to cytochrome c. This chain is Cytochrome c1, heme protein, mitochondrial (Cyc1), found in Mus musculus (Mouse).